An 862-amino-acid polypeptide reads, in one-letter code: Putative PIP5K1A and PSMD4-like protein (862 aa).

The PIPK domain occupies threonine 28–valine 396. Disordered stretches follow at residues proline 404–glycine 424 and histidine 453–serine 481. The segment covering serine 412–glycine 424 has biased composition (low complexity). The VWFA domain occupies methionine 490 to isoleucine 673. The 20-residue stretch at serine 696–arginine 715 folds into the UIM 1 domain. Residues glutamine 716–aspartate 740 form a disordered region. Positions glutamine 722–alanine 731 are enriched in low complexity. Residues methionine 766 to alanine 783 form the UIM 2 domain. The disordered stretch occupies residues asparagine 826–lysine 862. The span at lysine 850–lysine 862 shows a compositional bias: basic and acidic residues.

In terms of tissue distribution, testis-specific.

It is found in the cytoplasm. In terms of biological role, has negligible PIP5 kinase activity. Binds to ubiquitinated proteins. This is Putative PIP5K1A and PSMD4-like protein (PIPSL) from Homo sapiens (Human).